We begin with the raw amino-acid sequence, 182 residues long: Antigenic integral membrane glycoprotein (182 aa).

The first 35 residues, 1–35, serve as a signal peptide directing secretion; the sequence is MFSFHERMKKKHVTIRVYKHERILVFLFVLFISTT. N-linked (GlcNAc...) asparagine glycans are attached at residues Asn88 and Asn120. A helical transmembrane segment spans residues 162-180; it reads EFLMSSCIVITLNLFIFMY. Cys168 carries S-palmitoyl cysteine lipidation.

The protein localises to the cell membrane. In terms of biological role, major antigen in the surface tegument. In Schistosoma mansoni (Blood fluke), this protein is Antigenic integral membrane glycoprotein.